We begin with the raw amino-acid sequence, 294 residues long: UDP-3-O-acyl-N-acetylglucosamine deacetylase (294 aa).

Residues histidine 75, histidine 232, and aspartate 236 each coordinate Zn(2+). Histidine 259 functions as the Proton donor in the catalytic mechanism.

It belongs to the LpxC family. The cofactor is Zn(2+).

It carries out the reaction a UDP-3-O-[(3R)-3-hydroxyacyl]-N-acetyl-alpha-D-glucosamine + H2O = a UDP-3-O-[(3R)-3-hydroxyacyl]-alpha-D-glucosamine + acetate. Its pathway is glycolipid biosynthesis; lipid IV(A) biosynthesis; lipid IV(A) from (3R)-3-hydroxytetradecanoyl-[acyl-carrier-protein] and UDP-N-acetyl-alpha-D-glucosamine: step 2/6. In terms of biological role, catalyzes the hydrolysis of UDP-3-O-myristoyl-N-acetylglucosamine to form UDP-3-O-myristoylglucosamine and acetate, the committed step in lipid A biosynthesis. This chain is UDP-3-O-acyl-N-acetylglucosamine deacetylase, found in Campylobacter jejuni subsp. jejuni serotype O:23/36 (strain 81-176).